The sequence spans 363 residues: GDSL esterase/lipase At3g14220 (363 aa).

The N-terminal stretch at 1 to 28 (MAKNRNLVFFLGVLASFTLSSFPVTVSG) is a signal peptide. Residue S39 is the Nucleophile of the active site. Residues D318 and H321 contribute to the active site.

This sequence belongs to the 'GDSL' lipolytic enzyme family.

The protein resides in the secreted. The sequence is that of GDSL esterase/lipase At3g14220 from Arabidopsis thaliana (Mouse-ear cress).